We begin with the raw amino-acid sequence, 289 residues long: Elongation factor Ts (289 aa).

Residues 82–85 (TDFL) form an involved in Mg(2+) ion dislocation from EF-Tu region.

Belongs to the EF-Ts family.

Its subcellular location is the cytoplasm. In terms of biological role, associates with the EF-Tu.GDP complex and induces the exchange of GDP to GTP. It remains bound to the aminoacyl-tRNA.EF-Tu.GTP complex up to the GTP hydrolysis stage on the ribosome. The protein is Elongation factor Ts of Pseudomonas aeruginosa (strain LESB58).